The primary structure comprises 290 residues: MSPLVNAKKMIQNAYENHYAVAAININNLEWIKAALLAAQETNSPLLLATSEGAVKYMGGYDNCYAMVVNLIKQMNIKTPVCLHLDHGTYEGCIKAINAGYSSIMYDGSKLSIEENIKNTKELLTITKLKGVSVEVEVGSIGGTEDGITSEGELANIDDCYQMCLLDIDMLACGIGNIHGIYPKNWKGLNFNLLKEINNKVNKPIVLHGGSGISDEQILKAINLGVAKININTECQIAFSNALQDHLTKAGDLILSKQYDPRKILAYGVDAIKNTIIDKFTKFNSLNKIK.

Serine 51 is a D-glyceraldehyde 3-phosphate binding site. Aspartate 86 serves as the catalytic Proton donor. Zn(2+) is bound by residues histidine 87, aspartate 107, glutamate 137, and histidine 179. Residue glycine 180 participates in dihydroxyacetone phosphate binding. Histidine 208 is a binding site for Zn(2+). Residues 209-211 (GGS) and 230-233 (NINT) contribute to the dihydroxyacetone phosphate site.

Belongs to the class II fructose-bisphosphate aldolase family. In terms of assembly, homodimer. The cofactor is Zn(2+).

It catalyses the reaction beta-D-fructose 1,6-bisphosphate = D-glyceraldehyde 3-phosphate + dihydroxyacetone phosphate. The protein operates within carbohydrate degradation; glycolysis; D-glyceraldehyde 3-phosphate and glycerone phosphate from D-glucose: step 4/4. Its function is as follows. Catalyzes the aldol condensation of dihydroxyacetone phosphate (DHAP or glycerone-phosphate) with glyceraldehyde 3-phosphate (G3P) to form fructose 1,6-bisphosphate (FBP) in gluconeogenesis and the reverse reaction in glycolysis. In Ureaplasma parvum serovar 3 (strain ATCC 700970), this protein is Fructose-bisphosphate aldolase (fba).